Reading from the N-terminus, the 147-residue chain is Transmembrane protein 210 (147 aa).

The N-terminal stretch at 1 to 31 is a signal peptide; that stretch reads MAPCPQPESCPAGSPLGLICLSLLLIPASAG. Over 32 to 47 the chain is Extracellular; the sequence is TYCECSLGLSREALIA. Residues 48 to 68 traverse the membrane as a helical segment; sequence LIVVLAGVSASCFCALVVVAI. At 69–147 the chain is on the cytoplasmic side; it reads GVFRAKGDTC…PPPPPPPLPQ (79 aa). Residues 128–147 are disordered; the sequence is TMTAPLEPPPPPPPPPPLPQ. A compositionally biased stretch (pro residues) spans 133-147; sequence LEPPPPPPPPPPLPQ.

The protein resides in the membrane. The protein localises to the cytoplasmic vesicle. Its subcellular location is the secretory vesicle. It localises to the acrosome. This Mus musculus (Mouse) protein is Transmembrane protein 210 (Tmem210).